The primary structure comprises 100 residues: MIFMRKVVAEVSIIPLGKGASVSKYVKKAIEVFKKYDLKVETNAMGTVLEGDLDEILKAFKEAHSTVLNDVDRVVSSLKIDERKDKENTIERKLKAIGEL.

This sequence belongs to the UPF0045 family.

The sequence is that of UPF0045 protein MJ1052 from Methanocaldococcus jannaschii (strain ATCC 43067 / DSM 2661 / JAL-1 / JCM 10045 / NBRC 100440) (Methanococcus jannaschii).